The sequence spans 695 residues: MPPRCRRLPLLFILLLAVRPLSAAAASSIAAAPASSYRRISWASNLTLLGSASLLPGAAGVALTTPSRDGVGAGRALFSEPVRLLLPQDAAASASASRAATPASFSTRFTFRITPSPTYGDGLAFLLTSSRTFLGASNGFLGLFPSSSASDEGELRDVSTVAVEIDTHLDVALHDPDGNHVALDAGSIFSVASAQPGVDLKAGVPITAWVEYRAPRRRLNVWLSYSPSRRPEKPALSADVDLSGLLRTYMYAGFSASNGNGAALHVVERWTFRTFGFPNSSYAPPPTKYIGPMPPNNQPLPPPPSPSPSPPPPSPPPPPHPNHRRRHLFYKVLGGVLGGMVLLGLVVVGSAVLLGRSVRRKNQEHAVASEDMGEATLSMEVARAATKGFDSGNVIGVGGSGATVYEGVLPSGSRVAVKRFQAIGSCTKAFDSELKAMLNCPHHPNLVPLAGWCRSKDELVLVYEFMPNGNLDSALHTLGGATLPWEARFRAVYGVASALAYLHDECENRIIHRDVKSSNVMLDAEFNARLGDFGLARTVSHGGLPLTTQPAGTLGYLAPEYVHTGVATERSDVYSFGVLALEVATGRRPAERGISVVNWVWTLWGRRRLVDAADRRLQGRFVADEMRRVLLVGLCCVHPDCRKRPGMRRVVSMLDGTAPLILVPDKMPPVLLQPVPNASSMNSADTANTAFFSCR.

The N-terminal stretch at 1 to 23 is a signal peptide; that stretch reads MPPRCRRLPLLFILLLAVRPLSA. Over 24–331 the chain is Extracellular; that stretch reads AAASSIAAAP…NHRRRHLFYK (308 aa). The segment at 37–276 is legume-lectin like; the sequence is YRRISWASNL…VERWTFRTFG (240 aa). Asparagine 45 and asparagine 279 each carry an N-linked (GlcNAc...) asparagine glycan. Pro residues predominate over residues 286-320; sequence PTKYIGPMPPNNQPLPPPPSPSPSPPPPSPPPPPH. Residues 286 to 323 form a disordered region; it reads PTKYIGPMPPNNQPLPPPPSPSPSPPPPSPPPPPHPNH. The chain crosses the membrane as a helical span at residues 332 to 352; sequence VLGGVLGGMVLLGLVVVGSAV. Topologically, residues 353–695 are cytoplasmic; the sequence is LLGRSVRRKN…TANTAFFSCR (343 aa). A Phosphothreonine modification is found at threonine 376. Serine 378 is subject to Phosphoserine. Phosphothreonine occurs at positions 386 and 403. Positions 389–661 constitute a Protein kinase domain; the sequence is FDSGNVIGVG…SMLDGTAPLI (273 aa). Residues 395 to 403 and lysine 418 contribute to the ATP site; that span reads IGVGGSGAT. Aspartate 514 serves as the catalytic Proton acceptor. Threonine 657 is subject to Phosphothreonine.

This sequence in the N-terminal section; belongs to the leguminous lectin family. The protein in the C-terminal section; belongs to the protein kinase superfamily. Ser/Thr protein kinase family. In terms of assembly, interacts with INP1. Interaction with INP1 is required for DAF1 polar localization at the future aperture sites in tetrads. Post-translationally, autophosphorylated at Thr-376; Ser-378; Thr-386; Thr-403 and Thr-657. In terms of tissue distribution, expressed in roots, leaves, lemma, palea, pistil and anthers.

It is found in the cell membrane. It localises to the cytoplasm. Its subcellular location is the cytosol. The catalysed reaction is L-seryl-[protein] + ATP = O-phospho-L-seryl-[protein] + ADP + H(+). The enzyme catalyses L-threonyl-[protein] + ATP = O-phospho-L-threonyl-[protein] + ADP + H(+). Its function is as follows. Legume-lectin receptor-like kinase required for normal pollen development and male fertility. Regulates pollen exine assembly and aperture development. Plays a critical role in annulus formation, and may participate in the formation of the fibrillar-granular layer underneath the operculum. May function by regulating the expression of genes involved in pollen exine development. Kinase activity is required for its function in pollen development. This Oryza sativa subsp. japonica (Rice) protein is L-type lectin-domain containing receptor kinase S.7.